The sequence spans 155 residues: Small ribosomal subunit protein uS7c (155 aa).

Belongs to the universal ribosomal protein uS7 family. Part of the 30S ribosomal subunit.

Its subcellular location is the plastid. The protein resides in the chloroplast. One of the primary rRNA binding proteins, it binds directly to 16S rRNA where it nucleates assembly of the head domain of the 30S subunit. This chain is Small ribosomal subunit protein uS7c (rps7), found in Ananas comosus (Pineapple).